The following is a 102-amino-acid chain: S-phase delaying protein 2 (102 aa).

Residues 43-62 (FPSYHKDQTDRNELPQQKHD) are disordered. Over residues 46–62 (YHKDQTDRNELPQQKHD) the composition is skewed to basic and acidic residues.

The protein belongs to the DIF1/spd1 family.

The protein localises to the cytoplasm. The protein resides in the nucleus. Regulates the ribonucleotide reductase activity. In Schizosaccharomyces pombe (strain 972 / ATCC 24843) (Fission yeast), this protein is S-phase delaying protein 2 (spd2).